Here is a 393-residue protein sequence, read N- to C-terminus: Pectate lyase A (393 aa).

Residues 1-32 (MMNKASGRSFTRSSKYLLATLIAGMMASGVSA) form the signal peptide. 4 residues coordinate Ca(2+): E174, D176, D216, and D220. The active site involves R273. C330 and C358 are joined by a disulfide.

Belongs to the polysaccharide lyase 1 family. PLADES subfamily. It depends on Ca(2+) as a cofactor.

It localises to the secreted. It carries out the reaction Eliminative cleavage of (1-&gt;4)-alpha-D-galacturonan to give oligosaccharides with 4-deoxy-alpha-D-galact-4-enuronosyl groups at their non-reducing ends.. The protein operates within glycan metabolism; pectin degradation; 2-dehydro-3-deoxy-D-gluconate from pectin: step 2/5. In terms of biological role, involved in maceration and soft-rotting of plant tissue. The chain is Pectate lyase A (pelA) from Dickeya chrysanthemi (Pectobacterium chrysanthemi).